We begin with the raw amino-acid sequence, 509 residues long: ATP synthase subunit alpha (509 aa).

169–176 contacts ATP; it reads GDRQTGKT.

This sequence belongs to the ATPase alpha/beta chains family. F-type ATPases have 2 components, CF(1) - the catalytic core - and CF(0) - the membrane proton channel. CF(1) has five subunits: alpha(3), beta(3), gamma(1), delta(1), epsilon(1). CF(0) has three main subunits: a(1), b(2) and c(9-12). The alpha and beta chains form an alternating ring which encloses part of the gamma chain. CF(1) is attached to CF(0) by a central stalk formed by the gamma and epsilon chains, while a peripheral stalk is formed by the delta and b chains.

Its subcellular location is the cell inner membrane. It carries out the reaction ATP + H2O + 4 H(+)(in) = ADP + phosphate + 5 H(+)(out). In terms of biological role, produces ATP from ADP in the presence of a proton gradient across the membrane. The alpha chain is a regulatory subunit. The polypeptide is ATP synthase subunit alpha (Methylobacterium nodulans (strain LMG 21967 / CNCM I-2342 / ORS 2060)).